We begin with the raw amino-acid sequence, 161 residues long: Ribosome maturation factor RimP (161 aa).

It belongs to the RimP family.

It is found in the cytoplasm. Functionally, required for maturation of 30S ribosomal subunits. This chain is Ribosome maturation factor RimP, found in Rickettsia rickettsii (strain Iowa).